The sequence spans 177 residues: MLESEYHKSALARVMKEVGVDSPVKAPRFEKVCLSVGLGGASSDSKLLASAVEDLSLIAGQKAVVTVAKKSISSFKLRKGFPVGCRVTLRKRRMFDFINRLLYMALPDQKDFKGFTMRNFDGHGNMAFGLTEHIVFPEVDFDKTYRIIGMNVVVVTTASTDQLARILLSCYGFPFRD.

The protein belongs to the universal ribosomal protein uL5 family. As to quaternary structure, part of the 50S ribosomal subunit; part of the 5S rRNA/L5/L18/L25 subcomplex. Contacts the 5S rRNA and the P site tRNA. Forms a bridge to the 30S subunit in the 70S ribosome.

This is one of the proteins that bind and probably mediate the attachment of the 5S RNA into the large ribosomal subunit, where it forms part of the central protuberance. In the 70S ribosome it contacts protein S13 of the 30S subunit (bridge B1b), connecting the 2 subunits; this bridge is implicated in subunit movement. Contacts the P site tRNA; the 5S rRNA and some of its associated proteins might help stabilize positioning of ribosome-bound tRNAs. This Neorickettsia sennetsu (strain ATCC VR-367 / Miyayama) (Ehrlichia sennetsu) protein is Large ribosomal subunit protein uL5.